The chain runs to 475 residues: MNWTLALPEIVLALCGLAILVFGVVQKKEQPFLSCSMLTIGAFVLTGFLVVMSPDGVGYNHIFVNDDFARFMKILSLAGGAFATMLTVGYARNMKVERFEFPVLLLFSTLGAMMMASSENLMTLFIGLELSSLAIYILCAFARDEVRGGEAGLKYFVLGSLASGLLLYGSSLVYGYAGTMEYGGIQMALSTSSTAVPMGLMFGIVFMLAGLTFKLSAVPFHMWTPDVYQGAPTSVTAYMAGAPKFAAFALLLRVMAGPFGHVAPQWQILVEGVSMLSMLFGSLAAIPQTDIKRLMAYSSIGHMGYALMGLCAGTAEGMRGTLVYLTTYLLMNVGAFAVIIAMRRKGREVTGIADLAGLGKTDPGLATAMAIFMFSMAGAPPLAGFFGKMMVFYAAINAHLFGLAAIGVVSSVIGGYYYVRIVKVMFFDDAAAPLDRRPLSLSFVSVGMGIATTGFLLVLGPVSSAAQAAAQALFR.

The next 14 membrane-spanning stretches (helical) occupy residues L5 to V25, F32 to M52, F71 to A91, F99 to E119, L121 to F141, Y155 to G175, S193 to F213, P232 to L252, W266 to I286, L294 to T314, L322 to M342, A366 to F386, M389 to V409, and L439 to L459.

This sequence belongs to the complex I subunit 2 family. As to quaternary structure, NDH-1 is composed of 14 different subunits. Subunits NuoA, H, J, K, L, M, N constitute the membrane sector of the complex.

The protein localises to the cell inner membrane. The catalysed reaction is a quinone + NADH + 5 H(+)(in) = a quinol + NAD(+) + 4 H(+)(out). In terms of biological role, NDH-1 shuttles electrons from NADH, via FMN and iron-sulfur (Fe-S) centers, to quinones in the respiratory chain. The immediate electron acceptor for the enzyme in this species is believed to be ubiquinone. Couples the redox reaction to proton translocation (for every two electrons transferred, four hydrogen ions are translocated across the cytoplasmic membrane), and thus conserves the redox energy in a proton gradient. The chain is NADH-quinone oxidoreductase subunit N from Gluconacetobacter diazotrophicus (strain ATCC 49037 / DSM 5601 / CCUG 37298 / CIP 103539 / LMG 7603 / PAl5).